A 629-amino-acid polypeptide reads, in one-letter code: uncharacterized protein (629 aa).

The ABC transporter 1 domain occupies 4–255 (LKAENLYKTY…KRAEREAQAE (252 aa)). Residue 36-43 (GPNGTGKS) participates in ATP binding. The segment at 284-304 (KARIDRVETLKEQTGPQSSGS) is disordered. The span at 285–294 (ARIDRVETLK) shows a compositional bias: basic and acidic residues. Residues 295–304 (EQTGPQSSGS) are compositionally biased toward polar residues. An ABC transporter 2 domain is found at 319–537 (IEAENVMIAY…EESKAKKAAP (219 aa)). Residue 351–358 (GPNGIGKT) coordinates ATP. The interval 530–555 (SKAKKAAPKPAAEEKTAEAEPKKKRK) is disordered. Positions 540–550 (AAEEKTAEAEP) are enriched in basic and acidic residues. A coiled-coil region spans residues 560–629 (KDQLEWDGIE…LSLMIEELES (70 aa)).

The protein belongs to the ABC transporter superfamily.

This is an uncharacterized protein from Bacillus subtilis (strain 168).